Consider the following 1194-residue polypeptide: ATP-dependent RNA helicase DHX30 (1194 aa).

A compositionally biased stretch (basic and acidic residues) spans 1–10 (MFTLDSFRKD). The tract at residues 1 to 27 (MFTLDSFRKDRTQHRQRQCKLPPPRLP) is disordered. Residue serine 6 is modified to Phosphoserine. The 69-residue stretch at 53–121 (PKNLLNSVIG…QAAAAACQLF (69 aa)) folds into the DRBM domain. The segment at 153-200 (WWRPEPTMPPTSWRQLNPENIRPAGTGGLSRSLGREEEEDEEEELEEG) is disordered. Acidic residues predominate over residues 188–200 (EEEEDEEEELEEG). Serine 226 and serine 380 each carry phosphoserine. The region spanning 444–612 (LSAIEQHPVV…FGGCPVIKVP (169 aa)) is the Helicase ATP-binding domain. 457-464 (GDTGCGKT) provides a ligand contact to ATP. The DEAH box motif lies at 559-562 (DEVH). Residues 654 to 827 (LVTDLVLHID…NLVLQAKIHM (174 aa)) enclose the Helicase C-terminal domain.

Belongs to the DEAD box helicase family. DEAH subfamily. As to quaternary structure, identified in a complex with TFAM and SSBP1. Interacts (via N-terminus) with ZC3HAV1 (via N-terminal domain) in an RNA-independent manner. Found in a complex with GRSF1, DDX28, FASTKD2 and FASTKD5.

The protein resides in the cytoplasm. It localises to the mitochondrion. Its subcellular location is the mitochondrion matrix. The protein localises to the mitochondrion nucleoid. The enzyme catalyses ATP + H2O = ADP + phosphate + H(+). Its function is as follows. RNA-dependent helicase. Plays an important role in the assembly of the mitochondrial large ribosomal subunit. Associates with mitochondrial DNA. Required for optimal function of the zinc-finger antiviral protein ZC3HAV1. Involved in nervous system development and differentiation through its involvement in the up-regulation of a number of genes which are required for neurogenesis, including GSC, NCAM1, neurogenin, and NEUROD. This is ATP-dependent RNA helicase DHX30 (Dhx30) from Rattus norvegicus (Rat).